Reading from the N-terminus, the 1051-residue chain is Carbamoyl phosphate synthase large chain (1051 aa).

Residues 1 to 399 (MKETPKKVLV…SLQKAVRMLD (399 aa)) are carboxyphosphate synthetic domain. ATP is bound by residues Arg-127, Arg-167, Gly-173, Gly-174, Lys-206, Leu-208, Glu-213, Gly-239, Val-240, His-241, Gln-282, and Glu-296. The region spanning 131 to 325 (RETMIENNLP…LAYVSAKLAL (195 aa)) is the ATP-grasp 1 domain. Residues Gln-282, Glu-296, and Asn-298 each contribute to the Mg(2+) site. The Mn(2+) site is built by Gln-282, Glu-296, and Asn-298. Residues 400-548 (IGEPGVVGGK…LTYNGTEDDL (149 aa)) form an oligomerization domain region. The segment at 549-930 (EFSQGNKLLM…LKSWLSSIPN (382 aa)) is carbamoyl phosphate synthetic domain. The 191-residue stretch at 673-863 (SKLLDKLGIS…LINESMKAIF (191 aa)) folds into the ATP-grasp 2 domain. Residues Arg-709, Lys-748, Ile-750, Glu-755, Gly-779, Val-780, His-781, Ser-782, Gln-822, and Glu-834 each contribute to the ATP site. Positions 822, 834, and 836 each coordinate Mg(2+). The Mn(2+) site is built by Gln-822, Glu-834, and Asn-836. The region spanning 930–1051 (NRIPNKNGIA…FEISEYGGGI (122 aa)) is the MGS-like domain. The interval 931-1051 (RIPNKNGIAL…FEISEYGGGI (121 aa)) is allosteric domain.

This sequence belongs to the CarB family. In terms of assembly, composed of two chains; the small (or glutamine) chain promotes the hydrolysis of glutamine to ammonia, which is used by the large (or ammonia) chain to synthesize carbamoyl phosphate. Tetramer of heterodimers (alpha,beta)4. The cofactor is Mg(2+). It depends on Mn(2+) as a cofactor.

The catalysed reaction is hydrogencarbonate + L-glutamine + 2 ATP + H2O = carbamoyl phosphate + L-glutamate + 2 ADP + phosphate + 2 H(+). It carries out the reaction hydrogencarbonate + NH4(+) + 2 ATP = carbamoyl phosphate + 2 ADP + phosphate + 2 H(+). It participates in amino-acid biosynthesis; L-arginine biosynthesis; carbamoyl phosphate from bicarbonate: step 1/1. Its pathway is pyrimidine metabolism; UMP biosynthesis via de novo pathway; (S)-dihydroorotate from bicarbonate: step 1/3. Large subunit of the glutamine-dependent carbamoyl phosphate synthetase (CPSase). CPSase catalyzes the formation of carbamoyl phosphate from the ammonia moiety of glutamine, carbonate, and phosphate donated by ATP, constituting the first step of 2 biosynthetic pathways, one leading to arginine and/or urea and the other to pyrimidine nucleotides. The large subunit (synthetase) binds the substrates ammonia (free or transferred from glutamine from the small subunit), hydrogencarbonate and ATP and carries out an ATP-coupled ligase reaction, activating hydrogencarbonate by forming carboxy phosphate which reacts with ammonia to form carbamoyl phosphate. This chain is Carbamoyl phosphate synthase large chain, found in Saccharolobus islandicus (strain M.16.4 / Kamchatka #3) (Sulfolobus islandicus).